The primary structure comprises 896 residues: Histone-lysine N-methyltransferase CLF (896 aa).

Disordered stretches follow at residues 344–419 (DNLK…NRRI) and 459–514 (SGIK…DGCD). A compositionally biased stretch (low complexity) spans 358–390 (GSSGQKTKSQQSESSSTARVSSESSESEVQLLS). 3 stretches are compositionally biased toward polar residues: residues 391 to 400 (NKSPQHSPGL), 465 to 476 (VVSSQCNSPSTR), and 485 to 498 (QMEN…AQSD). Over residues 504-514 (NNEHSATDGCD) the composition is skewed to basic and acidic residues. A CXC domain is found at 633–732 (RKRITERKDQ…TLGVPNQRGD (100 aa)). In terms of domain architecture, SET spans 747–862 (QRVLLGRSDV…AGEELFYDYR (116 aa)). Residue Y861 coordinates S-adenosyl-L-methionine. A compositionally biased stretch (basic and acidic residues) spans 869–884 (PAWARKPEGPGAKDDA). Residues 869–896 (PAWARKPEGPGAKDDAQPSTGRAKKLAH) are disordered.

Belongs to the class V-like SAM-binding methyltransferase superfamily. Histone-lysine methyltransferase family. EZ subfamily. Interacts with FIE1. Component of the polycomb repressive complex 2 (PRC2), composed of the core PRC2 components FIE2, EMF2B and EZ1. PRC2 methylates 'Lys-27' residues of histone H3 (H3K27me3), leading to transcriptional repression of the affected target gene. In terms of tissue distribution, widely expressed. Highly expressed in young panicle.

It catalyses the reaction L-lysyl(27)-[histone H3] + 3 S-adenosyl-L-methionine = N(6),N(6),N(6)-trimethyl-L-lysyl(27)-[histone H3] + 3 S-adenosyl-L-homocysteine + 3 H(+). In terms of biological role, polycomb group (PcG) protein. Catalytic subunit of some PcG multiprotein complex, which methylates 'Lys-27' of histone H3, leading to transcriptional repression of the affected target genes. PcG proteins act by forming multiprotein complexes, which are required to maintain the transcriptionally repressive state of homeotic genes throughout development. PcG proteins are not required to initiate repression, but to maintain it during later stages of development. Involved in the regulation of flowering. Represses flowering under long day (LD) conditions. Regulates the trimethylation on histone H3 'Lys-27' (H3K27me3) of the flowering regulators MADS14, MADS15, RFT1, EHD1, HD3A and LF. The chain is Histone-lysine N-methyltransferase CLF from Oryza sativa subsp. japonica (Rice).